The chain runs to 120 residues: Ribosome-binding factor A (120 aa).

It belongs to the RbfA family. In terms of assembly, monomer. Binds 30S ribosomal subunits, but not 50S ribosomal subunits or 70S ribosomes.

The protein resides in the cytoplasm. Functionally, one of several proteins that assist in the late maturation steps of the functional core of the 30S ribosomal subunit. Associates with free 30S ribosomal subunits (but not with 30S subunits that are part of 70S ribosomes or polysomes). Required for efficient processing of 16S rRNA. May interact with the 5'-terminal helix region of 16S rRNA. In Desulforamulus reducens (strain ATCC BAA-1160 / DSM 100696 / MI-1) (Desulfotomaculum reducens), this protein is Ribosome-binding factor A.